We begin with the raw amino-acid sequence, 920 residues long: Disintegrin and metalloproteinase domain-containing protein 19 (920 aa).

Residues 1–26 (MPGRAGVARFCLLALALQLHWPLAAC) form the signal peptide. Residues 27 to 204 (EPGWTTRGSQ…TKKQPRRMKR (178 aa)) constitute a propeptide that is removed on maturation. Over 27 to 703 (EPGWTTRGSQ…VDSGPLPPKS (677 aa)) the chain is Extracellular. The Cysteine switch motif lies at 131 to 138 (STCRGIRG). Cys133 contributes to the Zn(2+) binding site. N-linked (GlcNAc...) asparagine glycosylation occurs at Asn145. A Peptidase M12B domain is found at 211–409 (KYVELYLVAD…GGGMCLSNMP (199 aa)). Intrachain disulfides connect Cys321/Cys404, Cys361/Cys388, and Cys362/Cys371. A Zn(2+)-binding site is contributed by His346. Residue Glu347 is part of the active site. The Zn(2+) site is built by His350 and His356. Positions 417 to 503 (GRRCGNGYLE…HCPTNYYQMD (87 aa)) constitute a Disintegrin domain. N-linked (GlcNAc...) asparagine glycosylation is found at Asn445 and Asn448. A disulfide bridge links Cys475 with Cys495. Asn649 carries N-linked (GlcNAc...) asparagine glycosylation. An EGF-like domain is found at 654 to 686 (ETEGCGKKCNGHGVCNNNKNCHCFPGWSPPFCN). Cystine bridges form between Cys658-Cys668, Cys662-Cys674, and Cys676-Cys685. Residues 704–724 (VGPVIAGVFSALFVLAVLVLL) traverse the membrane as a helical segment. Residues 725-920 (CHCYRQSHKL…RVGAIISSKI (196 aa)) are Cytoplasmic-facing. The disordered stretch occupies residues 755-920 (SQSGGTGHAN…RVGAIISSKI (166 aa)). A compositionally biased stretch (polar residues) spans 767–783 (FKLQTPQGKRKVTNTPE). Residues 825-834 (ARIERKESAR) are compositionally biased toward basic and acidic residues. The short motif at 835 to 846 (RPPPSRPMPPAP) is the SH3-binding element. Composition is skewed to pro residues over residues 835–846 (RPPPSRPMPPAP) and 888–903 (TSGP…PVPK).

As to quaternary structure, interacts with SH3PXD2A. Requires Zn(2+) as cofactor. The precursor is cleaved by a furin endopeptidase. Widely expressed, with the highest expression in bone, heart and lung, followed by brain and spleen and relatively low expression in liver, skeletal muscle, kidney and testis. In bone, primarily expressed in cell of the osteoblast lineage and not detected in mature osteoclasts.

The protein resides in the membrane. Its function is as follows. Participates in the proteolytic processing of beta-type neuregulin isoforms which are involved in neurogenesis and synaptogenesis, suggesting a regulatory role in glial cell. Also cleaves alpha-2 macroglobulin. May be involved in osteoblast differentiation and/or osteoblast activity in bone. This is Disintegrin and metalloproteinase domain-containing protein 19 (Adam19) from Mus musculus (Mouse).